The sequence spans 161 residues: Cytochrome c-type biogenesis protein CcmE (161 aa).

Residues 1-8 (MNARRKKR) are Cytoplasmic-facing. A helical; Signal-anchor for type II membrane protein transmembrane segment spans residues 9-29 (LALATALIGGVAAIASLLLYA). The Periplasmic segment spans residues 30 to 161 (LNSNLNLFYT…EYDSTQKTGY (132 aa)). His-131 and Tyr-135 together coordinate heme.

It belongs to the CcmE/CycJ family.

Its subcellular location is the cell inner membrane. Heme chaperone required for the biogenesis of c-type cytochromes. Transiently binds heme delivered by CcmC and transfers the heme to apo-cytochromes in a process facilitated by CcmF and CcmH. This Shewanella loihica (strain ATCC BAA-1088 / PV-4) protein is Cytochrome c-type biogenesis protein CcmE.